The following is a 285-amino-acid chain: Urease accessory protein UreD (285 aa).

It belongs to the UreD family. As to quaternary structure, ureD, UreF and UreG form a complex that acts as a GTP-hydrolysis-dependent molecular chaperone, activating the urease apoprotein by helping to assemble the nickel containing metallocenter of UreC. The UreE protein probably delivers the nickel.

It localises to the cytoplasm. In terms of biological role, required for maturation of urease via the functional incorporation of the urease nickel metallocenter. The chain is Urease accessory protein UreD from Cenarchaeum symbiosum (strain A).